The following is a 153-amino-acid chain: Histone H2B.4 (153 aa).

Basic and acidic residues-rich tracts occupy residues 1 to 28 (MAPK…EKAP) and 36 to 53 (EKRL…EGKK). Positions 1-61 (MAPKAEKKPA…KKAGRKKAKK (61 aa)) are disordered. An N6-acetyllysine mark is found at Lys-7 and Lys-37. A Glycyl lysine isopeptide (Lys-Gly) (interchain with G-Cter in ubiquitin) cross-link involves residue Lys-149.

Belongs to the histone H2B family. In terms of assembly, the nucleosome is a histone octamer containing two molecules each of H2A, H2B, H3 and H4 assembled in one H3-H4 heterotetramer and two H2A-H2B heterodimers. The octamer wraps approximately 147 bp of DNA. Can be acetylated to form H2BK6ac and H2BK33ac. Post-translationally, monoubiquitinated by BRE1 to form H2BK143ub1 and deubiquitinated by UBP26. Required for heterochromatic histone H3 di- and trimethylation at H3K4me. May give a specific tag for epigenetic transcriptional activation.

The protein resides in the nucleus. Its subcellular location is the chromosome. In terms of biological role, core component of nucleosome. Nucleosomes wrap and compact DNA into chromatin, limiting DNA accessibility to the cellular machineries which require DNA as a template. Histones thereby play a central role in transcription regulation, DNA repair, DNA replication and chromosomal stability. DNA accessibility is regulated via a complex set of post-translational modifications of histones, also called histone code, and nucleosome remodeling. This chain is Histone H2B.4 (H2B.4), found in Oryza sativa subsp. indica (Rice).